Reading from the N-terminus, the 280-residue chain is Probable S-methyl-5'-thioinosine phosphorylase (280 aa).

Residues Thr8 and 50–51 (RH) contribute to the phosphate site. Met175 lines the substrate pocket. Thr176 serves as a coordination point for phosphate. 199–201 (NYA) is a substrate binding site.

The protein belongs to the PNP/MTAP phosphorylase family. MTAP subfamily. Homotrimer.

It carries out the reaction S-methyl-5'-thioinosine + phosphate = 5-(methylsulfanyl)-alpha-D-ribose 1-phosphate + hypoxanthine. Its pathway is purine metabolism; purine nucleoside salvage. Catalyzes the reversible phosphorylation of S-methyl-5'-thioinosine (MTI) to hypoxanthine and 5-methylthioribose-1-phosphate. Involved in the breakdown of S-methyl-5'-thioadenosine (MTA), a major by-product of polyamine biosynthesis. Catabolism of (MTA) occurs via deamination to MTI and phosphorolysis to hypoxanthine. The protein is Probable S-methyl-5'-thioinosine phosphorylase of Methanothermobacter thermautotrophicus (strain ATCC 29096 / DSM 1053 / JCM 10044 / NBRC 100330 / Delta H) (Methanobacterium thermoautotrophicum).